A 259-amino-acid chain; its full sequence is Taurine import ATP-binding protein TauB (259 aa).

Residues Leu-4–Ala-233 form the ABC transporter domain. Gly-38–Thr-45 contacts ATP.

It belongs to the ABC transporter superfamily. Taurine importer (TC 3.A.1.17.1) family. In terms of assembly, the complex is composed of two ATP-binding proteins (TauB), two transmembrane proteins (TauC) and a solute-binding protein (TauA).

It is found in the cell inner membrane. The catalysed reaction is taurine(out) + ATP + H2O = taurine(in) + ADP + phosphate + H(+). In terms of biological role, part of the ABC transporter complex TauABC involved in taurine import. Responsible for energy coupling to the transport system. The chain is Taurine import ATP-binding protein TauB from Pseudomonas entomophila (strain L48).